The following is a 2325-amino-acid chain: Centriolin (2325 aa).

The segment at 1–33 is disordered; sequence MKKGSQQKIFSKAKIPSSSHSPIPSSMSNMRSR. The span at 16-33 shows a compositional bias: low complexity; the sequence is PSSSHSPIPSSMSNMRSR. 4 LRR repeats span residues 126–147, 148–169, 170–191, and 194–215; these read KLEV…DKLL, KLRE…ENMC, NLQK…LGKK, and SLRV…SKLK. Positions 228–266 constitute an LRRCT domain; it reads NPVVTLPHYLQFTIFHLRSLESLEGQPVTTQDRQEAFER. 2 coiled-coil regions span residues 267–343 and 435–799; these read FSLE…IELT and LDTQ…LNHV. A Phosphoserine modification is found at Ser831. The stretch at 851-1101 forms a coiled coil; sequence LARSKWERDE…ARLQNVLDLT (251 aa). Residues 1150-1241 form a disordered region; that stretch reads PSSKVSSHSS…DQEEPPFVPP (92 aa). The span at 1224–1235 shows a compositional bias: acidic residues; it reads SQEESELDDQEE. Residues 1317–2255 are a coiled coil; sequence EHHNLENEVS…DRLKAQLRHC (939 aa). Phosphoserine is present on Ser1475. The required for centrosome localization stretch occupies residues 1948 to 2118; it reads MMFQRLQKER…ELVAQDNHER (171 aa). The sufficient for interaction with HOOK2 stretch occupies residues 1985-2325; it reads QKSKLDQVLS…QNQEKNASAR (341 aa). Residues 2288-2325 are disordered; the sequence is VTSTSADSASSPSLSQLESSLTEDSQLGQNQEKNASAR. Low complexity predominate over residues 2290–2314; that stretch reads STSADSASSPSLSQLESSLTEDSQL. Positions 2315–2325 are enriched in polar residues; it reads GQNQEKNASAR.

Interacts with HOOK2. Interacts with EXOC6 and SNAPIN. Associates with the exocyst complex. In terms of tissue distribution, widely expressed with highest levels in testis and trachea.

The protein localises to the cytoplasm. Its subcellular location is the cytoskeleton. It is found in the microtubule organizing center. It localises to the centrosome. The protein resides in the midbody. The protein localises to the midbody ring. Functionally, involved in cell cycle progression and cytokinesis. During the late steps of cytokinesis, anchors exocyst and SNARE complexes at the midbody, thereby allowing secretory vesicle-mediated abscission. The chain is Centriolin (CNTRL) from Homo sapiens (Human).